The chain runs to 300 residues: Homoserine kinase (300 aa).

87-97 (PISRGLGSSSA) serves as a coordination point for ATP.

The protein belongs to the GHMP kinase family. Homoserine kinase subfamily.

The protein resides in the cytoplasm. The catalysed reaction is L-homoserine + ATP = O-phospho-L-homoserine + ADP + H(+). Its pathway is amino-acid biosynthesis; L-threonine biosynthesis; L-threonine from L-aspartate: step 4/5. Its function is as follows. Catalyzes the ATP-dependent phosphorylation of L-homoserine to L-homoserine phosphate. In Clostridium kluyveri (strain ATCC 8527 / DSM 555 / NBRC 12016 / NCIMB 10680 / K1), this protein is Homoserine kinase.